The sequence spans 615 residues: Protein translocase subunit SecD (615 aa).

6 helical membrane passes run 10-30 (YIML…NLYG), 452-472 (QGLE…IFFY), 477-497 (LIAT…MSLL), 504-524 (MPGI…NVLI), 546-568 (YAGA…IILY), and 585-605 (GVAT…NLLY).

The protein belongs to the SecD/SecF family. SecD subfamily. In terms of assembly, forms a complex with SecF. Part of the essential Sec protein translocation apparatus which comprises SecA, SecYEG and auxiliary proteins SecDF-YajC and YidC.

The protein localises to the cell inner membrane. Functionally, part of the Sec protein translocase complex. Interacts with the SecYEG preprotein conducting channel. SecDF uses the proton motive force (PMF) to complete protein translocation after the ATP-dependent function of SecA. The polypeptide is Protein translocase subunit SecD (Salmonella choleraesuis (strain SC-B67)).